The primary structure comprises 517 residues: Cytochrome P450 monooxygenase bsc11 (517 aa).

A helical transmembrane segment spans residues 16-33 (ALPLTCTGLIIIFAFYLS). N-linked (GlcNAc...) asparagine glycosylation occurs at N204. C448 lines the heme pocket.

Belongs to the cytochrome P450 family. Requires heme as cofactor.

It is found in the membrane. It functions in the pathway mycotoxin biosynthesis. Cytochrome P450 monooxygenase; part of the gene cluster that mediates the biosynthesis of the diterpene glucoside brassicicene C. In the first step of the brassicicene C biosynthesis, the bifunctional diterpene synthase bsc8 that possesses both prenyl transferase and terpene cyclase activity, converts isopentenyl diphosphate and dimethylallyl diphosphate into geranylgeranyl diphosphate (GGDP) that is further converted into fusicocca-2,10(14)-diene, the first precursor for brassicicene C. Fusicocca-2,10(14)-diene is then substrate of cytochrome P450 monooxygenase bsc1 for hydroxylation at the C-8 position. Oxidation at C-16 position to aldehyde is then catalyzed by the cytochrome P450 monooyxygenase bsc7, yielding fusicocca-2,10(14)-diene-8-beta,16-diol. Follows the isomerization of the double bond and reduction of aldehyde to alcohol catalyzed by the short-chain dehydrogenase/reductase bsc3 to yield the diol compound fusicocca-1,10(14)-diene-8 beta,16-diol. The next step is the oxidation at the C-3 position of fusicocca-2,10(14)-diene-8-beta,16-diol catalyzed by the alpha-ketoglutarate dependent dioxygenase bsc9, to produce a triol compound. Methylation of the hydroxy group at position 16 is performed by the methyltransferase bsc6. 16-O-methylation is followed by oxidation at the C-13 position to ketone and an alkyl shift of the methyl group leads to brassicicene C. Although the probable acetyltransferase bsc4 is included in the gene cluster, no acetylation reactions are necessary for brassicicene C biosynthesis. However, the fact that brassicicene E, which is a structurally related compound having an acetoxy group at position 12, was previously isolated from another strain of A.brassicicola suggests that the ATCC 96836 strain might also produce a small amount of brassicicene E. The sequence is that of Cytochrome P450 monooxygenase bsc11 from Alternaria brassicicola (Dark leaf spot agent).